A 321-amino-acid chain; its full sequence is Beta-1,3-N-acetylglucosaminyltransferase manic fringe (321 aa).

Residues 1-7 lie on the Cytoplasmic side of the membrane; sequence MQCRLPR. Residues 8-27 form a helical; Signal-anchor for type II membrane protein membrane-spanning segment; that stretch reads GLAGALLTLLCMGLLCLRYH. At 28–321 the chain is on the lumenal side; the sequence is LNLSPQRVQE…TPWCPQLGAR (294 aa). R70 is a binding site for substrate. An N-linked (GlcNAc...) asparagine glycan is attached at N109. 2 disulfides stabilise this stretch: C110–C121 and C139–C202. D143 provides a ligand contact to substrate. D144 is a Mn(2+) binding site. N185 carries an N-linked (GlcNAc...) asparagine glycan. Residue D232 is part of the active site. Residue H256 coordinates Mn(2+). Cysteines 306 and 315 form a disulfide.

It belongs to the glycosyltransferase 31 family. It depends on Mn(2+) as a cofactor.

It is found in the golgi apparatus membrane. The catalysed reaction is 3-O-(alpha-L-fucosyl)-L-threonyl-[EGF-like domain protein] + UDP-N-acetyl-alpha-D-glucosamine = 3-O-(N-acetyl-beta-D-glucosaminyl-(1-&gt;3)-alpha-L-fucosyl)-L-threonyl-[EGF-like domain protein] + UDP + H(+). The enzyme catalyses 3-O-(alpha-L-fucosyl)-L-seryl-[EGF-like domain protein] + UDP-N-acetyl-alpha-D-glucosamine = 3-O-(N-acetyl-beta-D-glucosaminyl-(1-&gt;3)-alpha-L-fucosyl)-L-seryl-[EGF-like domain protein] + UDP + H(+). Its function is as follows. Glycosyltransferase that initiates the elongation of O-linked fucose residues attached to EGF-like repeats in the extracellular domain of Notch molecules. Modulates NOTCH1 activity by modifying O-fucose residues at specific EGF-like domains resulting in inhibition of NOTCH1 activation by JAG1 and enhancement of NOTCH1 activation by DLL1 via an increase in its binding to DLL1. The sequence is that of Beta-1,3-N-acetylglucosaminyltransferase manic fringe (MFNG) from Pan troglodytes (Chimpanzee).